The primary structure comprises 258 residues: 5'-nucleotidase SurE (258 aa).

The a divalent metal cation site is built by D14, D15, S45, and N101.

This sequence belongs to the SurE nucleotidase family. A divalent metal cation serves as cofactor.

It is found in the cytoplasm. It carries out the reaction a ribonucleoside 5'-phosphate + H2O = a ribonucleoside + phosphate. Its function is as follows. Nucleotidase that shows phosphatase activity on nucleoside 5'-monophosphates. The protein is 5'-nucleotidase SurE of Chlorobium limicola (strain DSM 245 / NBRC 103803 / 6330).